We begin with the raw amino-acid sequence, 317 residues long: Signal recognition particle receptor FtsY (317 aa).

Residues 117-124 (GVNGVGKT), 199-203 (DTAGR), and 263-266 (TKLD) each bind GTP.

This sequence belongs to the GTP-binding SRP family. FtsY subfamily. Part of the signal recognition particle protein translocation system, which is composed of SRP and FtsY.

The protein resides in the cell membrane. It localises to the cytoplasm. It catalyses the reaction GTP + H2O = GDP + phosphate + H(+). Its function is as follows. Involved in targeting and insertion of nascent membrane proteins into the cytoplasmic membrane. Acts as a receptor for the complex formed by the signal recognition particle (SRP) and the ribosome-nascent chain (RNC). The protein is Signal recognition particle receptor FtsY of Deinococcus radiodurans (strain ATCC 13939 / DSM 20539 / JCM 16871 / CCUG 27074 / LMG 4051 / NBRC 15346 / NCIMB 9279 / VKM B-1422 / R1).